The primary structure comprises 461 residues: Phosphatidate cytidylyltransferase 1 (461 aa).

The disordered stretch occupies residues 1–68 (MLELRHRGGC…PEVPPSSDRT (68 aa)). Arg7 is modified (omega-N-methylarginine). The span at 22 to 56 (REGEAAGGDHETESTSDKETDIDDRYGDLDARGDS) shows a compositional bias: basic and acidic residues. Phosphoserine occurs at positions 35 and 37. 6 consecutive transmembrane segments (helical) span residues 96–116 (MISL…LLVL), 149–169 (FLLC…FATF), 183–203 (HRFI…LSLV), 230–250 (LVIQ…SSVI), 279–299 (GFIG…YVLS), and 357–377 (IALS…ASGF).

It belongs to the CDS family. In terms of assembly, homodimer. Interacts with FOS; this interaction may enhance catalytic activity. Requires Mg(2+) as cofactor. As to expression, brain, retina and testis. Found in cerebellar Purkinje cells, pineal body, inner segment of photoreceptor cells and postmitotic spermatocytes and spermatids.

It is found in the endoplasmic reticulum membrane. It carries out the reaction a 1,2-diacyl-sn-glycero-3-phosphate + CTP + H(+) = a CDP-1,2-diacyl-sn-glycerol + diphosphate. It catalyses the reaction 1-octadecanoyl-2-(5Z,8Z,11Z,14Z-eicosatetraenoyl)-sn-glycero-3-phosphate + CTP + H(+) = 1-octadecanoyl-2-(5Z,8Z,11Z,14Z-eicosatetraenoyl)-sn-glycero-3-cytidine-5'-diphosphate + diphosphate. The enzyme catalyses 1-octadecanoyl-2-(9Z,12Z-octadecadienoyl)-sn-glycero-3-phosphate + CTP + H(+) = 1-octadecanoyl-2-(9Z,12Z-octadecadienoyl)-sn-glycero-3-cytidine-5'-diphosphate + diphosphate. The catalysed reaction is 1-hexadecanoyl-2-(5Z,8Z,11Z,14Z-eicosatetraenoyl)-sn-glycero-3-phosphate + CTP + H(+) = 1-hexadecanoyl-2-(5Z,8Z,11Z,14Z-eicosatetraenoyl)-sn-glycero-3-cytidine-5'-diphosphate + diphosphate. It carries out the reaction 1,2-di-(5Z,8Z,11Z,14Z)-eicosatetraenoyl-sn-glycero-3-phosphate + CTP + H(+) = 1,2-di-(5Z,8Z,11Z,14Z-eicosatetraenoyl)-sn-glycero-3-cytidine-5'-diphosphate + diphosphate. It catalyses the reaction 1-octadecanoyl-2-(9Z-octadecenoyl)-sn-glycero-3-phosphate + CTP + H(+) = 1-octadecanoyl-2-(9Z-octadecenoyl)-sn-glycero-3-cytidine-5'-diphosphate + diphosphate. The enzyme catalyses 1-octadecanoyl-2-(4Z,7Z,10Z,13Z,16Z,19Z-docosahexaenoyl)-sn-glycero-3-phosphate + CTP + H(+) = 1-octadecanoyl-2-(4Z,7Z,10Z,13Z,16Z,19Z-docosahexaenoyl)-sn-glycero-3-cytidine-5'-diphosphate + diphosphate. The catalysed reaction is 1,2-di-(9Z,12Z-octadecadienoyl)-sn-glycero-3-phosphate + CTP + H(+) = 1,2-di-(9Z,12Z-octadecadienoyl)-sn-glycero-3-cytidine-5'-diphosphate + diphosphate. It carries out the reaction 1,2-di-(9Z-octadecenoyl)-sn-glycero-3-phosphate + CTP + H(+) = 1,2-di-(9Z-octadecenoyl)-sn-glycero-3-cytidine-5'-diphosphate + diphosphate. The protein operates within phospholipid metabolism; CDP-diacylglycerol biosynthesis; CDP-diacylglycerol from sn-glycerol 3-phosphate: step 3/3. With respect to regulation, activated by GTP. Inhibited by CDP-diacylglycerol and by phosphatidylglycerol 4,5-bisphosphate (PPI2). In terms of biological role, catalyzes the conversion of phosphatidic acid (PA) to CDP-diacylglycerol (CDP-DAG), an essential intermediate in the synthesis of phosphatidylglycerol, cardiolipin and phosphatidylinositol. Exhibits almost no acyl chain preference for PA, showing no discrimination for the sn-1/sn-2 acyl chain composition of PAs. Plays an important role in regulatinng the growth of lipid droplets which are storage organelles at the center of lipid and energy homeostasis. Positively regulates the differentiation and development of adipocytes. The polypeptide is Phosphatidate cytidylyltransferase 1 (Rattus norvegicus (Rat)).